A 125-amino-acid polypeptide reads, in one-letter code: Small ribosomal subunit protein uS13 (125 aa).

The disordered stretch occupies residues 101-125; sequence QRTKTNARTRKGKRKTVANKKIAAK.

It belongs to the universal ribosomal protein uS13 family. As to quaternary structure, part of the 30S ribosomal subunit. Forms a loose heterodimer with protein S19. Forms two bridges to the 50S subunit in the 70S ribosome.

In terms of biological role, located at the top of the head of the 30S subunit, it contacts several helices of the 16S rRNA. In the 70S ribosome it contacts the 23S rRNA (bridge B1a) and protein L5 of the 50S subunit (bridge B1b), connecting the 2 subunits; these bridges are implicated in subunit movement. Contacts the tRNAs in the A and P-sites. This chain is Small ribosomal subunit protein uS13, found in Borrelia duttonii (strain Ly).